A 200-amino-acid chain; its full sequence is ADP-ribosylation factor-like protein 4A (200 aa).

Gly2 carries N-myristoyl glycine lipidation. GTP contacts are provided by residues 27 to 34, 75 to 79, and 134 to 137; these read GLDCAGKT, DVGGQ, and NKQD.

This sequence belongs to the small GTPase superfamily. Arf family. Interacts with CYTH2. Interacts with KPNA2; the interaction is direct. Does not interact with ARL4A. Post-translationally, myristoylated. In terms of tissue distribution, expressed strongly in testis and liver. Expressed slightly in heart, spleen, lung and kidney.

Its subcellular location is the cell membrane. It localises to the cytoplasm. It is found in the nucleus. The protein resides in the nucleolus. Small GTP-binding protein which cycles between an inactive GDP-bound and an active GTP-bound form, and the rate of cycling is regulated by guanine nucleotide exchange factors (GEF) and GTPase-activating proteins (GAP). GTP-binding protein that does not act as an allosteric activator of the cholera toxin catalytic subunit. Recruits CYTH1, CYTH2, CYTH3 and CYTH4 to the plasma membrane in GDP-bound form. This is ADP-ribosylation factor-like protein 4A (Arl4a) from Mus musculus (Mouse).